The following is a 185-amino-acid chain: Ribosome-recycling factor (185 aa).

The protein belongs to the RRF family.

Its subcellular location is the cytoplasm. Functionally, responsible for the release of ribosomes from messenger RNA at the termination of protein biosynthesis. May increase the efficiency of translation by recycling ribosomes from one round of translation to another. The polypeptide is Ribosome-recycling factor (Aliivibrio salmonicida (strain LFI1238) (Vibrio salmonicida (strain LFI1238))).